Here is a 472-residue protein sequence, read N- to C-terminus: 3-isopropylmalate dehydratase large subunit (472 aa).

Residues cysteine 353, cysteine 414, and cysteine 417 each contribute to the [4Fe-4S] cluster site.

Belongs to the aconitase/IPM isomerase family. LeuC type 1 subfamily. Heterodimer of LeuC and LeuD. [4Fe-4S] cluster is required as a cofactor.

The enzyme catalyses (2R,3S)-3-isopropylmalate = (2S)-2-isopropylmalate. It functions in the pathway amino-acid biosynthesis; L-leucine biosynthesis; L-leucine from 3-methyl-2-oxobutanoate: step 2/4. Catalyzes the isomerization between 2-isopropylmalate and 3-isopropylmalate, via the formation of 2-isopropylmaleate. This Acinetobacter baumannii (strain ATCC 17978 / DSM 105126 / CIP 53.77 / LMG 1025 / NCDC KC755 / 5377) protein is 3-isopropylmalate dehydratase large subunit.